The following is a 510-amino-acid chain: Fumarate hydratase, mitochondrial (510 aa).

The transit peptide at Met-1 to Met-44 directs the protein to the mitochondrion. An N6-acetyllysine; alternate mark is found at Lys-61, Lys-66, and Lys-80. Residues Lys-61, Lys-66, and Lys-80 each carry the N6-succinyllysine; alternate modification. Thr-85 and Thr-90 each carry phosphothreonine. Lys-94 carries the post-translational modification N6-acetyllysine. N6-acetyllysine; alternate occurs at positions 115 and 122. An N6-succinyllysine; alternate mark is found at Lys-115 and Lys-122. Substrate is bound by residues Ser-145–Thr-147, His-176–Asp-179, and Ser-186–Asn-188. Lys-213 carries the N6-acetyllysine modification. Residue Lys-223 is modified to N6-acetyllysine; alternate. An N6-succinyllysine; alternate modification is found at Lys-223. Thr-234 contributes to the substrate binding site. The active-site Proton donor/acceptor is His-235. Thr-236 carries the phosphothreonine; by PRKDC modification. N6-acetyllysine is present on Lys-256. Lys-292 is modified (N6-acetyllysine; alternate). The residue at position 292 (Lys-292) is an N6-succinyllysine; alternate. The active site involves Ser-365. Substrate-binding positions include Ser-366 and Lys-371–Asn-373. Ser-366 carries the phosphoserine modification. N6-succinyllysine occurs at positions 467 and 473. An N6-acetyllysine modification is found at Lys-502.

Belongs to the class-II fumarase/aspartase family. Fumarase subfamily. In terms of assembly, homotetramer. Interacts with H2AZ1. In terms of processing, phosphorylation at Thr-236 by PRKDC in response to DNA damage promotes translocation to the nucleus and recruitment to DNA double-strand breaks (DSBs). Expressed in red blood cells; underexpressed in red blood cells (cytoplasm) of patients with hereditary non-spherocytic hemolytic anemia of unknown etiology.

The protein resides in the mitochondrion. Its subcellular location is the cytoplasm. It localises to the cytosol. The protein localises to the nucleus. It is found in the chromosome. It carries out the reaction (S)-malate = fumarate + H2O. It functions in the pathway carbohydrate metabolism; tricarboxylic acid cycle; (S)-malate from fumarate: step 1/1. Functionally, catalyzes the reversible stereospecific interconversion of fumarate to L-malate. Experiments in other species have demonstrated that specific isoforms of this protein act in defined pathways and favor one direction over the other. In terms of biological role, catalyzes the hydration of fumarate to L-malate in the tricarboxylic acid (TCA) cycle to facilitate a transition step in the production of energy in the form of NADH. Its function is as follows. Catalyzes the dehydration of L-malate to fumarate. Fumarate metabolism in the cytosol plays a role during urea cycle and arginine metabolism; fumarate being a by-product of the urea cycle and amino-acid catabolism. Also plays a role in DNA repair by promoting non-homologous end-joining (NHEJ). In response to DNA damage and phosphorylation by PRKDC, translocates to the nucleus and accumulates at DNA double-strand breaks (DSBs): acts by catalyzing formation of fumarate, an inhibitor of KDM2B histone demethylase activity, resulting in enhanced dimethylation of histone H3 'Lys-36' (H3K36me2). In Homo sapiens (Human), this protein is Fumarate hydratase, mitochondrial.